The chain runs to 859 residues: Mismatch repair endonuclease PMS2 (859 aa).

ATP contacts are provided by N45, D70, E109, A110, and L111. Disordered regions lie at residues 391 to 413 (ELEKPVPGKQDNSPSLKSTADEK), 427 to 455 (LHPTKEIKSRGPETAELTRSFPSEKRGVL), and 469 to 555 (RGSQ…KPED). Composition is skewed to basic and acidic residues over residues 427-439 (LHPTKEIKSRGPE) and 485-495 (CMDREKIEKDS). Polar residues predominate over residues 512 to 525 (EVASSFSSDYNVSS). The short motif at 574-577 (KRFK) is the Nuclear localization signal element. Residues 578 to 597 (TEERPSNVNISQRLPGPQST) form a disordered region. Positions 583–597 (SNVNISQRLPGPQST) are enriched in polar residues.

Belongs to the DNA mismatch repair MutL/HexB family. Heterodimer of PMS2 and MLH1 (MutL alpha); this interaction is required for the stability of both partners. Forms a ternary complex with MutS alpha (MSH2-MSH6) or MutS beta (MSH2-MSH3). Part of the BRCA1-associated genome surveillance complex (BASC), which contains BRCA1, MSH2, MSH6, MLH1, ATM, BLM, PMS2 and the RAD50-MRE11-NBS1 protein complex. This association could be a dynamic process changing throughout the cell cycle and within subnuclear domains. Interacts with MTMR15/FAN1.

It localises to the nucleus. It catalyses the reaction ATP + H2O = ADP + phosphate + H(+). Functionally, component of the post-replicative DNA mismatch repair system (MMR). Heterodimerizes with MLH1 to form MutL alpha. DNA repair is initiated by MutS alpha (MSH2-MSH6) or MutS beta (MSH2-MSH3) binding to a dsDNA mismatch, then MutL alpha is recruited to the heteroduplex. Assembly of the MutL-MutS-heteroduplex ternary complex in presence of RFC and PCNA is sufficient to activate endonuclease activity of PMS2. It introduces single-strand breaks near the mismatch and thus generates new entry points for the exonuclease EXO1 to degrade the strand containing the mismatch. DNA methylation would prevent cleavage and therefore assure that only the newly mutated DNA strand is going to be corrected. MutL alpha (MLH1-PMS2) interacts physically with the clamp loader subunits of DNA polymerase III, suggesting that it may play a role to recruit the DNA polymerase III to the site of the MMR. Also implicated in DNA damage signaling, a process which induces cell cycle arrest and can lead to apoptosis in case of major DNA damages. Possesses an ATPase activity, but in the absence of gross structural changes, ATP hydrolysis may not be necessary for proficient mismatch repair. The sequence is that of Mismatch repair endonuclease PMS2 from Mus musculus (Mouse).